Reading from the N-terminus, the 368-residue chain is 3-dehydroquinate synthase (368 aa).

NAD(+) is bound by residues 109-113 (GVIGD), 133-134 (TS), lysine 146, lysine 155, and 173-176 (TLQT). Residues glutamate 188, histidine 253, and histidine 270 each contribute to the Zn(2+) site.

It belongs to the sugar phosphate cyclases superfamily. Dehydroquinate synthase family. It depends on Co(2+) as a cofactor. Requires Zn(2+) as cofactor. NAD(+) serves as cofactor.

It localises to the cytoplasm. The catalysed reaction is 7-phospho-2-dehydro-3-deoxy-D-arabino-heptonate = 3-dehydroquinate + phosphate. It participates in metabolic intermediate biosynthesis; chorismate biosynthesis; chorismate from D-erythrose 4-phosphate and phosphoenolpyruvate: step 2/7. Its function is as follows. Catalyzes the conversion of 3-deoxy-D-arabino-heptulosonate 7-phosphate (DAHP) to dehydroquinate (DHQ). The protein is 3-dehydroquinate synthase of Synechococcus sp. (strain ATCC 27144 / PCC 6301 / SAUG 1402/1) (Anacystis nidulans).